We begin with the raw amino-acid sequence, 185 residues long: Ribosome-recycling factor (185 aa).

The protein belongs to the RRF family.

The protein resides in the cytoplasm. Responsible for the release of ribosomes from messenger RNA at the termination of protein biosynthesis. May increase the efficiency of translation by recycling ribosomes from one round of translation to another. The protein is Ribosome-recycling factor of Shewanella pealeana (strain ATCC 700345 / ANG-SQ1).